The chain runs to 546 residues: Tyrosine-protein kinase yes (546 aa).

The span at 1-18 (MGCVKSKEDKGPTQKYRP) shows a compositional bias: basic and acidic residues. Residues 1-58 (MGCVKSKEDKGPTQKYRPDPTNPTPGSHMGLYGPDPTQMGQSPALKGPTNNYNSRSSG) form a disordered region. Glycine 2 carries N-myristoyl glycine lipidation. The S-palmitoyl cysteine; in membrane form moiety is linked to residue cysteine 3. The segment covering 48–58 (PTNNYNSRSSG) has biased composition (polar residues). Positions 94-155 (GGVTFFVALY…PSNYVAPADS (62 aa)) constitute an SH3 domain. The SH2 domain occupies 161–258 (WYFGKMGRKD…GLCYRLTTVC (98 aa)). Positions 280 to 533 (LRLELKLGQG…YIQSFLEDYF (254 aa)) constitute a Protein kinase domain. Residues 286–294 (LGQGCFGEV) and lysine 308 contribute to the ATP site. Aspartate 399 (proton acceptor) is an active-site residue. Tyrosine 429 carries the phosphotyrosine; by autocatalysis modification. Phosphotyrosine; by CSK is present on tyrosine 540.

This sequence belongs to the protein kinase superfamily. Tyr protein kinase family. SRC subfamily. Post-translationally, autophosphorylation at Tyr-429 maintains enzyme activity. In terms of processing, palmitoylation at Cys-3 promotes membrane localization. In terms of tissue distribution, widely expressed.

It localises to the cell membrane. It is found in the cytoplasm. The protein localises to the cytoskeleton. Its subcellular location is the microtubule organizing center. The protein resides in the centrosome. It localises to the cytosol. It is found in the cell junction. The catalysed reaction is L-tyrosyl-[protein] + ATP = O-phospho-L-tyrosyl-[protein] + ADP + H(+). Functionally, non-receptor protein tyrosine kinase that is involved in the regulation of cell growth and survival, apoptosis, cell-cell adhesion, cytoskeleton remodeling, differentiation, G2/M progression and cytokinesis. Required for convergent extension cell movements during gastrulation, acting with fyna via rhoa. May be required for epiboly to occur, possibly through its effects in calcium signaling. During embryonic development, phosphorylates ptk2.1/fak. This is Tyrosine-protein kinase yes (yes1) from Danio rerio (Zebrafish).